Here is a 169-residue protein sequence, read N- to C-terminus: MISIDFINETDLKVKEWEDLAKQIINSGFKYLKLKNKINLSITFLDSEPAQKINQEYRNHSYIPDVTSFPIEMSPQEIKALGYQEIGDIFICIEEAERKSIKYDHSLKEEMGFLFTHGFLHLMGYDHETNEKDEEEMFFIQDEILKINKINYTIKFTEEDYKEIEEKDE.

3 residues coordinate Zn(2+): histidine 117, histidine 121, and histidine 127.

The protein belongs to the endoribonuclease YbeY family. Zn(2+) serves as cofactor.

It localises to the cytoplasm. Its function is as follows. Single strand-specific metallo-endoribonuclease involved in late-stage 70S ribosome quality control and in maturation of the 3' terminus of the 16S rRNA. This is Endoribonuclease YbeY from Mesoplasma florum (strain ATCC 33453 / NBRC 100688 / NCTC 11704 / L1) (Acholeplasma florum).